A 259-amino-acid chain; its full sequence is Hydroxyacylglutathione hydrolase (259 aa).

7 residues coordinate Zn(2+): histidine 56, histidine 58, aspartate 60, histidine 61, histidine 112, aspartate 133, and histidine 171.

The protein belongs to the metallo-beta-lactamase superfamily. Glyoxalase II family. As to quaternary structure, monomer. The cofactor is Zn(2+).

The enzyme catalyses an S-(2-hydroxyacyl)glutathione + H2O = a 2-hydroxy carboxylate + glutathione + H(+). It functions in the pathway secondary metabolite metabolism; methylglyoxal degradation; (R)-lactate from methylglyoxal: step 2/2. Thiolesterase that catalyzes the hydrolysis of S-D-lactoyl-glutathione to form glutathione and D-lactic acid. This chain is Hydroxyacylglutathione hydrolase, found in Pseudomonas putida (strain ATCC 47054 / DSM 6125 / CFBP 8728 / NCIMB 11950 / KT2440).